A 388-amino-acid chain; its full sequence is Chorismate synthase (388 aa).

NADP(+) is bound by residues Arg39 and Arg45. Residues 130–132, 251–252, Gly296, 311–315, and Arg337 contribute to the FMN site; these read RSS, NA, and KPIPT.

Belongs to the chorismate synthase family. Homotetramer. Requires FMNH2 as cofactor.

It catalyses the reaction 5-O-(1-carboxyvinyl)-3-phosphoshikimate = chorismate + phosphate. Its pathway is metabolic intermediate biosynthesis; chorismate biosynthesis; chorismate from D-erythrose 4-phosphate and phosphoenolpyruvate: step 7/7. Functionally, catalyzes the anti-1,4-elimination of the C-3 phosphate and the C-6 proR hydrogen from 5-enolpyruvylshikimate-3-phosphate (EPSP) to yield chorismate, which is the branch point compound that serves as the starting substrate for the three terminal pathways of aromatic amino acid biosynthesis. This reaction introduces a second double bond into the aromatic ring system. This Streptococcus pyogenes serotype M1 protein is Chorismate synthase.